The chain runs to 528 residues: Ribonuclease Y (528 aa).

The helical transmembrane segment at 15–35 threads the bilayer; that stretch reads SLLVFALICGSIIGYFLYSFF. The region spanning 217-277 is the KH domain; the sequence is NISVVNIPNE…IRREIAKKTL (61 aa). Residues 343-436 enclose the HD domain; the sequence is VLKHSLEVAF…VAIADTLSSA (94 aa).

The protein belongs to the RNase Y family.

The protein resides in the cell membrane. Functionally, endoribonuclease that initiates mRNA decay. The sequence is that of Ribonuclease Y from Onion yellows phytoplasma (strain OY-M).